Consider the following 231-residue polypeptide: Ureidoacrylate amidohydrolase RutB (231 aa).

Aspartate 25 (proton acceptor) is an active-site residue. The active site involves lysine 134. The active-site Nucleophile is the cysteine 167.

It belongs to the isochorismatase family. RutB subfamily.

It catalyses the reaction (Z)-3-ureidoacrylate + H2O + H(+) = (Z)-3-aminoacrylate + NH4(+) + CO2. The catalysed reaction is (Z)-3-ureidoacrylate + H2O = (Z)-3-aminoacrylate + carbamate + H(+). It carries out the reaction (Z)-2-methylureidoacrylate + H2O + H(+) = (Z)-2-methylaminoacrylate + NH4(+) + CO2. In terms of biological role, hydrolyzes ureidoacrylate to form aminoacrylate and carbamate. The carbamate hydrolyzes spontaneously, thereby releasing one of the nitrogen atoms of the pyrimidine ring as ammonia and one of its carbon atoms as CO2. In Escherichia coli O157:H7 (strain EC4115 / EHEC), this protein is Ureidoacrylate amidohydrolase RutB.